The following is a 380-amino-acid chain: Cytochrome b (380 aa).

Transmembrane regions (helical) follow at residues 34–54 (FGSL…LLAT), 78–99 (WLIR…YLHI), 114–134 (WNTG…GYVL), and 179–199 (FFAL…IHLT). H84 and H98 together coordinate heme b. Heme b contacts are provided by H183 and H197. H202 provides a ligand contact to a ubiquinone. A run of 4 helical transmembrane segments spans residues 227 to 247 (LKDI…ALFS), 289 to 309 (LGGV…PLLH), 321 to 341 (LSQL…WVGS), and 348 to 368 (FIII…LLFP).

This sequence belongs to the cytochrome b family. In terms of assembly, the cytochrome bc1 complex contains 11 subunits: 3 respiratory subunits (MT-CYB, CYC1 and UQCRFS1), 2 core proteins (UQCRC1 and UQCRC2) and 6 low-molecular weight proteins (UQCRH/QCR6, UQCRB/QCR7, UQCRQ/QCR8, UQCR10/QCR9, UQCR11/QCR10 and a cleavage product of UQCRFS1). This cytochrome bc1 complex then forms a dimer. Heme b is required as a cofactor.

It localises to the mitochondrion inner membrane. Functionally, component of the ubiquinol-cytochrome c reductase complex (complex III or cytochrome b-c1 complex) that is part of the mitochondrial respiratory chain. The b-c1 complex mediates electron transfer from ubiquinol to cytochrome c. Contributes to the generation of a proton gradient across the mitochondrial membrane that is then used for ATP synthesis. This is Cytochrome b (MT-CYB) from Cepphus grylle (Black guillemot).